A 41-amino-acid polypeptide reads, in one-letter code: Alpha-1B-glycoprotein (41 aa).

A glycan (N-linked (GlcNAc...) asparagine) is linked at Asn-23.

Interacts with CRISP3. In terms of processing, glycosylated. Plasma.

Its subcellular location is the secreted. The chain is Alpha-1B-glycoprotein (A1BG) from Equus caballus (Horse).